The primary structure comprises 636 residues: PTS system beta-glucoside-specific EIIBCA component (636 aa).

One can recognise a PTS EIIB type-1 domain in the interval 1–86; sequence MKYEQLAKDI…VEIGGFQNQA (86 aa). C26 functions as the Phosphocysteine intermediate; for EIIB activity in the catalytic mechanism. 10 helical membrane passes run 104 to 124, 146 to 166, 172 to 192, 215 to 235, 258 to 278, 299 to 319, 337 to 357, 369 to 389, 407 to 427, and 444 to 464; these read IDII…TGMI, LLHA…GYTA, ATPF…LVVL, FLGI…IILA, LVPF…IGPI, IIAG…GLHW, VLAM…AVWL, VPAF…GVTL, AIIG…IFGI, and IVIA…LFGL. Positions 105–476 constitute a PTS EIIC type-1 domain; it reads DIIASIFTPV…GNASDEQTET (372 aa). A disordered region spans residues 472-492; it reads EQTETKAHTSTGTGEKEEISS. The PTS EIIA type-1 domain occupies 506–610; it reads DEAFSSGALG…AVTTPVIVTN (105 aa). The Tele-phosphohistidine intermediate; for EIIA activity role is filled by H558.

It localises to the cell membrane. The phosphoenolpyruvate-dependent sugar phosphotransferase system (sugar PTS), a major carbohydrate active -transport system, catalyzes the phosphorylation of incoming sugar substrates concomitantly with their translocation across the cell membrane. This system is involved in beta-glucoside transport. In Halalkalibacterium halodurans (strain ATCC BAA-125 / DSM 18197 / FERM 7344 / JCM 9153 / C-125) (Bacillus halodurans), this protein is PTS system beta-glucoside-specific EIIBCA component (bglP).